A 156-amino-acid chain; its full sequence is Ribosomal RNA large subunit methyltransferase H (156 aa).

S-adenosyl-L-methionine contacts are provided by residues L73, G104, and L123 to L128.

It belongs to the RNA methyltransferase RlmH family. Homodimer.

It localises to the cytoplasm. It catalyses the reaction pseudouridine(1915) in 23S rRNA + S-adenosyl-L-methionine = N(3)-methylpseudouridine(1915) in 23S rRNA + S-adenosyl-L-homocysteine + H(+). Functionally, specifically methylates the pseudouridine at position 1915 (m3Psi1915) in 23S rRNA. This is Ribosomal RNA large subunit methyltransferase H from Hahella chejuensis (strain KCTC 2396).